The following is a 121-amino-acid chain: Histone H2B.6 (121 aa).

A disordered region spans residues 1–28 (MAPKAEKKPKVEKRVPGKEGETSKKKAK). K7 and K13 each carry N6-acetyllysine.

The protein belongs to the histone H2B family. In terms of assembly, the nucleosome is a histone octamer containing two molecules each of H2A, H2B, H3 and H4 assembled in one H3-H4 heterotetramer and two H2A-H2B heterodimers. The octamer wraps approximately 147 bp of DNA. In terms of processing, can be acetylated to form H2BK6ac and H2BK33ac. In terms of tissue distribution, expressed preferentially in meristematic tissues.

The protein localises to the nucleus. It is found in the chromosome. In terms of biological role, core component of nucleosome. Nucleosomes wrap and compact DNA into chromatin, limiting DNA accessibility to the cellular machineries which require DNA as a template. Histones thereby play a central role in transcription regulation, DNA repair, DNA replication and chromosomal stability. DNA accessibility is regulated via a complex set of post-translational modifications of histones, also called histone code, and nucleosome remodeling. In Triticum aestivum (Wheat), this protein is Histone H2B.6 (TH123).